The sequence spans 335 residues: Adenosine deaminase (335 aa).

Residues H12 and H14 each coordinate Zn(2+). Residues H14 and D16 each contribute to the substrate site. H197 serves as a coordination point for Zn(2+). The Proton donor role is filled by E200. D278 provides a ligand contact to Zn(2+).

This sequence belongs to the metallo-dependent hydrolases superfamily. Adenosine and AMP deaminases family. Adenosine deaminase subfamily. Zn(2+) is required as a cofactor.

The enzyme catalyses adenosine + H2O + H(+) = inosine + NH4(+). It catalyses the reaction 2'-deoxyadenosine + H2O + H(+) = 2'-deoxyinosine + NH4(+). In terms of biological role, catalyzes the hydrolytic deamination of adenosine and 2-deoxyadenosine. The chain is Adenosine deaminase from Clostridium botulinum (strain Langeland / NCTC 10281 / Type F).